The primary structure comprises 320 residues: Cytochrome f (320 aa).

Residues 1 to 35 (MQNRNTFSWVKEQMTRSISVSIIIYVITRTSISNA) form the signal peptide. Positions 36, 56, 59, and 60 each coordinate heme. A helical membrane pass occupies residues 286 to 306 (VQGLLFFLASIILAQIFLVLK).

Belongs to the cytochrome f family. The 4 large subunits of the cytochrome b6-f complex are cytochrome b6, subunit IV (17 kDa polypeptide, petD), cytochrome f and the Rieske protein, while the 4 small subunits are PetG, PetL, PetM and PetN. The complex functions as a dimer. Heme is required as a cofactor.

It is found in the plastid. Its subcellular location is the chloroplast thylakoid membrane. Its function is as follows. Component of the cytochrome b6-f complex, which mediates electron transfer between photosystem II (PSII) and photosystem I (PSI), cyclic electron flow around PSI, and state transitions. In Chloranthus spicatus (Chulantree), this protein is Cytochrome f.